The following is a 55-amino-acid chain: ATP synthase F(0) complex subunit 8 (55 aa).

Residues Pro8–Ile24 traverse the membrane as a helical segment.

It belongs to the ATPase protein 8 family. As to quaternary structure, component of the ATP synthase complex composed at least of ATP5F1A/subunit alpha, ATP5F1B/subunit beta, ATP5MC1/subunit c (homooctomer), MT-ATP6/subunit a, MT-ATP8/subunit 8, ATP5ME/subunit e, ATP5MF/subunit f, ATP5MG/subunit g, ATP5MK/subunit k, ATP5MJ/subunit j, ATP5F1C/subunit gamma, ATP5F1D/subunit delta, ATP5F1E/subunit epsilon, ATP5PF/subunit F6, ATP5PB/subunit b, ATP5PD/subunit d, ATP5PO/subunit OSCP. ATP synthase complex consists of a soluble F(1) head domain (subunits alpha(3) and beta(3)) - the catalytic core - and a membrane F(0) domain - the membrane proton channel (subunits c, a, 8, e, f, g, k and j). These two domains are linked by a central stalk (subunits gamma, delta, and epsilon) rotating inside the F1 region and a stationary peripheral stalk (subunits F6, b, d, and OSCP).

It localises to the mitochondrion membrane. Functionally, subunit 8, of the mitochondrial membrane ATP synthase complex (F(1)F(0) ATP synthase or Complex V) that produces ATP from ADP in the presence of a proton gradient across the membrane which is generated by electron transport complexes of the respiratory chain. ATP synthase complex consist of a soluble F(1) head domain - the catalytic core - and a membrane F(1) domain - the membrane proton channel. These two domains are linked by a central stalk rotating inside the F(1) region and a stationary peripheral stalk. During catalysis, ATP synthesis in the catalytic domain of F(1) is coupled via a rotary mechanism of the central stalk subunits to proton translocation. In vivo, can only synthesize ATP although its ATP hydrolase activity can be activated artificially in vitro. Part of the complex F(0) domain. The sequence is that of ATP synthase F(0) complex subunit 8 from Coturnix japonica (Japanese quail).